Reading from the N-terminus, the 119-residue chain is Aspartate 1-decarboxylase (119 aa).

Ser25 (schiff-base intermediate with substrate; via pyruvic acid) is an active-site residue. Position 25 is a pyruvic acid (Ser) (Ser25). Thr57 lines the substrate pocket. Residue Tyr58 is the Proton donor of the active site. 73–75 (GAA) contacts substrate.

The protein belongs to the PanD family. Heterooctamer of four alpha and four beta subunits. Requires pyruvate as cofactor. Is synthesized initially as an inactive proenzyme, which is activated by self-cleavage at a specific serine bond to produce a beta-subunit with a hydroxyl group at its C-terminus and an alpha-subunit with a pyruvoyl group at its N-terminus.

The protein localises to the cytoplasm. It catalyses the reaction L-aspartate + H(+) = beta-alanine + CO2. It functions in the pathway cofactor biosynthesis; (R)-pantothenate biosynthesis; beta-alanine from L-aspartate: step 1/1. Its function is as follows. Catalyzes the pyruvoyl-dependent decarboxylation of aspartate to produce beta-alanine. This is Aspartate 1-decarboxylase from Thermosipho melanesiensis (strain DSM 12029 / CIP 104789 / BI429).